A 1976-amino-acid polypeptide reads, in one-letter code: DNA-directed RNA polymerase V subunit 1 (1976 aa).

Zn(2+) contacts are provided by cysteine 57, cysteine 60, cysteine 68, histidine 71, cysteine 98, and cysteine 101. Residues aspartate 449, aspartate 451, and aspartate 453 each coordinate Mg(2+). The bridging helix stretch occupies residues 751–763 (PYEEMAHSIAARE). The stretch at 1215–1216 (WG) is repeat 1. The tract at residues 1215 to 1693 (WGKRVDVGTG…AKKFPSSGGW (479 aa)) is 18 X 2 AA repeats of [WG]-[GW] repeats. Disordered stretches follow at residues 1272–1291 (EEEMAEWAESPERDSALGEP), 1298–1718 (DFQN…EDNL), and 1847–1976 (FTKP…QTQT). Basic and acidic residues-rich tracts occupy residues 1281-1291 (SPERDSALGEP) and 1298-1307 (DFQNLHDEGK). The stretch at 1329 to 1330 (WG) is repeat 2. Polar residues predominate over residues 1332 to 1348 (SKSTGGEANPESNWEKT). A compositionally biased stretch (basic and acidic residues) spans 1349–1371 (TNVEKEDAWSSWNTRKDAQESSK). A run of 15 repeats spans residues 1378-1379 (WG), 1415-1416 (WG), 1430-1431 (WG), 1439-1440 (WG), 1447-1448 (WG), 1464-1465 (WG), 1498-1499 (WG), 1528-1529 (WG), 1545-1546 (WG), 1562-1563 (WG), 1596-1597 (WG), 1604-1605 (WG), 1621-1622 (WG), 1638-1639 (WG), and 1641-1642 (WG). Positions 1415–1430 (WGHKSVSDKSWDKKNW) are enriched in basic and acidic residues. The span at 1491–1501 (TESNGATWGSS) shows a compositional bias: polar residues. Over residues 1648-1678 (AEDKDTNEDDRNPWVSLKETKSREKDDKERS) the composition is skewed to basic and acidic residues. 2 repeat units span residues 1680-1681 (WG) and 1692-1693 (GW). Over residues 1869-1878 (EQSQPPNQSI) the composition is skewed to polar residues. Low complexity predominate over residues 1886-1976 (QTQTQSQSPS…SSQSPSQTQT (91 aa)).

This sequence belongs to the RNA polymerase beta' chain family. As to quaternary structure, component of the RNA polymerase V complex. Interacts with NRPD4, NRPD2A, and (via C-terminus) with AGO4. Interacts with SUVH2. In terms of tissue distribution, mostly expressed in flowers, and, to a lower extent, in leaves. Present in sperm cells.

The protein resides in the nucleus. It is found in the nucleolus. It carries out the reaction RNA(n) + a ribonucleoside 5'-triphosphate = RNA(n+1) + diphosphate. In terms of biological role, DNA-dependent RNA polymerase catalyzes the transcription of DNA into RNA using the four ribonucleoside triphosphates as substrates. Largest and catalytic component of RNA polymerase V involved in RNA-directed DNA methylation-dependent (RdDM) silencing of endogenous repeated sequences, including transposable elements. Also required for full erasure of methylation when the RNA trigger is withdrawn. Seems also involved in the synthesis of short-interfering RNAs (siRNA). Essential component of a self-reinforcing loop coupling de novo DNA methylation to siRNA production. Involved in the maintenance of post-transcriptional RNA silencing. This is DNA-directed RNA polymerase V subunit 1 (NRPE1) from Arabidopsis thaliana (Mouse-ear cress).